The following is a 339-amino-acid chain: Heat-inducible transcription repressor HrcA (339 aa).

The protein belongs to the HrcA family.

Functionally, negative regulator of class I heat shock genes (grpE-dnaK-dnaJ and groELS operons). Prevents heat-shock induction of these operons. In Thermotoga neapolitana (strain ATCC 49049 / DSM 4359 / NBRC 107923 / NS-E), this protein is Heat-inducible transcription repressor HrcA.